Reading from the N-terminus, the 578-residue chain is Synaptic defective enhancer 1 (578 aa).

Disordered regions lie at residues 1–62 (MGEP…RKET), 173–216 (SEQA…SMDQ), 426–457 (PPLP…VSSA), and 474–578 (LGLH…FSNF). The span at 444 to 455 (PAAPVPASVPVS) shows a compositional bias: low complexity. Composition is skewed to pro residues over residues 481-491 (PPPPPPPPPPT) and 500-542 (IPPP…PNPN). A compositionally biased stretch (low complexity) spans 565-578 (NQFPPQQQQSFSNF).

May interact (via C-terminus) with ssup-72; the interaction may prevent ssup-72 binding to RNA polymerase II subunit ama-1. Expressed in germline, oocytes, epidermis, pharyngeal bulb and neurons.

The protein resides in the nucleus. The protein localises to the nucleus speckle. Acts as a negative regulator of nuclear pre-mRNA 3'-end processing (mRNA polyadenylation). Plays a role in tissue-specific expression of protein isoforms by regulating differential processing of pre-mRNA 3'-end (alternative polyadenylation). In neurons, regulates alternative polyadenylation of specific mRNAs including unc-44 and dlk-1 by interacting with phosphatase ssup-72 and thus preventing ssup-72 dephosphorylation of RNA polymerase II subunit ama-1. Specifically, alters the usage of internal polyadenylation sites (PAS) to promote the production of neuron-specific unc-44 isoform and dlk-1 isoform c, both required for normal synapse and axon development. Conversely, in the epidermis, by inhibiting ssup-72 function, promotes the usage of an internal PAS preventing the production of one of unc-44 isoforms. In neurons, also negatively regulates protein levels of pre-RNA processing protein psf-2. In Caenorhabditis elegans, this protein is Synaptic defective enhancer 1.